The following is a 26-amino-acid chain: Conotoxin Eb6.17 (26 aa).

2 disulfides stabilise this stretch: cysteine 7-cysteine 18 and cysteine 13-cysteine 25.

This sequence belongs to the conotoxin O1 superfamily. Expressed by the venom duct.

It is found in the secreted. This Conus ebraeus (Hebrew cone) protein is Conotoxin Eb6.17 (E1).